The following is a 1443-amino-acid chain: MGYQNHPSGSNSFHGEFKRCHSKPSKGAVASMINSEIGAVLAVMRRNVRWGVRYIADDDQLEHSLIHSLKELRKQIFSWQSNWQYVDPRLYIQPFLDVILSDETGAPITGVALSSVYKILTLEVFTLETVNVGEAMHIIVDAVKSCRFEVTDPASEEVVLMKILQVLLACVKSKASNGLSNQDICTIVNTCLRVVHQSSSKSELLQRIARHTMHELIRCIFSQLPFISPLANECELHVDNKVGTVDWDPNSGEKRVENGNIASISDTLGTDKDDPSSEMVIPETDLRNDEKKTEVSDDLNAAANGENAMMAPYGIPCMVEIFHFLCTLLNVGENGEVNSRSNPIAFDEDVPLFALGLINSAIELGGPSFREHPKLLTLIQDDLFCNLMQFGMSMSPLILSTVCSIVLNLYLNLRTELKVQLEAFFSYVLLRIAQSKHGSSYQQQEVAMEALVDLCRQHTFIAEVFANFDCDITCSNVFEDVSNLLSKNAFPVNGPLSAMHILALDGLISMVQGMAERVGEELPASDVPTHEERYEEFWTVRCENYGDPNFWVPFVRKVKHIKKKLMLGADRFNRDPNKGLQYLQGVHLLPEKLDPKSVACFFRYTCGLDKNVMGDFLGNHDQFCIQVLHEFAKTFDFQNMNLATALRLFVGTFKLSGEAQKIHRVLEAFSERYYEQSPHILIDKDAAFVLAYSIILLNTDQHNAQVKTRMTEEDFIRNNRTINGGADLPREYLSEIYHSIRHSEIQMDEDKGTGFQLMTASRWISVIYKSKETSPYIQCDAASHLDRDMFYIVSGPTIAATSVVFEQAEQEDVLRRCIDGLLAIAKLSAYYHLNSVLDDLVVSLCKFTPFFAPLSADEAVLVLGEDARARMATEAVFLIANKYGDYISAGWKNILECVLSLNKLHILPDHIASDAADDPELSTSNLEQEKPSANPVPVVSQSQPSAMPRKSSSFIGRFLLSFDSEETKPLPSEEELAAYKHARGIVKDCHIDSIFSDSKFLQAESLQQLVNSLIRASGKDEASSVFCLELLIAVTLNNRDRILLIWPTVYEHILGIVQLTLTPCTLVEKAVFGVLKICQRLLPYKENLTDELLKSLQLVLKLKAKVADAYCERIAQEVVRLVKANASHVRSRTGWRTIISLLSITARHPEASEAGFEALRFIMSEGAHLLPSNYELCLDAASHFAESRVGEVDRSISAIDLMSNSVFCLARWSQEAKNSIGETDAMMKLSEDIGKMWLKLVKNLKKVCLDQRDEVRNHAISMLQRAIAGADGIMLPQPLWFQCFDSAVFILLDDVLTFSIENSRKTLKKTVEETLVLATKLMSKAFLQSLQDISQQPSFCRLWVGVLNRLETYMSTEFRGKRSEKVNELIPELLKNTLLVMKATGVLLPGDDIGSDSFWQLTWLHVNKISPSLQSEVFPQEELDQFQRRNAKPEDPPVPGNEV.

One can recognise an SEC7 domain in the interval 554–743 (FVRKVKHIKK…SEIYHSIRHS (190 aa)). The active site involves Glu658. Disordered stretches follow at residues 917 to 949 (DDPE…AMPR) and 1424 to 1443 (DQFQ…GNEV). A compositionally biased stretch (polar residues) spans 939-949 (VSQSQPSAMPR). Residues 1425-1435 (QFQRRNAKPED) show a composition bias toward basic and acidic residues.

In terms of assembly, homodimer.

Its subcellular location is the cytoplasm. It is found in the cytosol. The protein resides in the golgi apparatus membrane. In terms of biological role, activates the ARF proteins by exchanging bound GDP for free GTP. Plays a role in vesicular protein sorting. Acts as the major regulator of retrograde Golgi to endoplasmic reticulum trafficking but is also involved in the endocytosis process. Could function redundantly with GNOM. Regulates vesicle trafficking required for the coordinated polar localization of auxin efflux carriers which in turn determines the direction of auxin flow. Mediates the endocytosis of PIN2 from plasma membrane to endosomal compartments. Required for maintenance of endoplasmic reticulum morphology. This is ARF guanine-nucleotide exchange factor GNL1 (GNL1) from Arabidopsis thaliana (Mouse-ear cress).